The primary structure comprises 548 residues: MNLFKIKANYIDIFNKEIYPASITIENGYIVSIEKIDATLDEYVLPGFIDAHIHIESSFLIPSNFAHLVVQHGTVATISDPHEIANVNGIDGINFMINNSKKTEFKIFFGAPSCVPALSSKFETSGHVLDDQDVDKLMESNDIYYLSEVMDFKGVINKDVEVINKINSALKRNKVVDGHAPGLSPHLTLKYMSSGISTDHECSTIEDARYKLSLGVKIIIREGSAAKNFESLHPLISECSNKYCDSLMFCFDDAHPNDILHGHINSIVARAIGYGHDFFDVLKIACINPVLHYKIPVGLLRIGDPADFIITKDIKTFKIDKTYINGKLVYSDGISHIPLISEIPINNFNCSEKSILDFKFSTKNKMIPIINCINNQIITQKTMIDSNLLAPDFQSNIAEDILKIAIINRYEDNSKISIGFIKNFGIRKGAIGSTVAHDSHNIIVVGTNDEYLCKATNIIIENKGGLCALNNEKTIIIKLPISGLMSTLPAKEIAFQYMKLNDFCKNILGSQLDDPLMTLSFMSLTVVPHLKINDKGLFDVDSFCFLDY.

This sequence belongs to the metallo-dependent hydrolases superfamily. Adenine deaminase family. The cofactor is Mn(2+).

It carries out the reaction adenine + H2O + H(+) = hypoxanthine + NH4(+). The protein is Adenine deaminase of Borreliella afzelii (strain PKo) (Borrelia afzelii).